Here is a 950-residue protein sequence, read N- to C-terminus: Leucine--tRNA ligase (950 aa).

The 'HIGH' region motif lies at 41-52 (PYPSGDGLHVGH). A 'KMSKS' region motif is present at residues 718-722 (KMSKS). Residue Lys721 participates in ATP binding.

The protein belongs to the class-I aminoacyl-tRNA synthetase family.

It is found in the cytoplasm. The catalysed reaction is tRNA(Leu) + L-leucine + ATP = L-leucyl-tRNA(Leu) + AMP + diphosphate. This Rhodopirellula baltica (strain DSM 10527 / NCIMB 13988 / SH1) protein is Leucine--tRNA ligase.